Consider the following 334-residue polypeptide: Putative ankyrin repeat protein RBE_0347 (334 aa).

ANK repeat units lie at residues 80–90 (EQGINPNIQDS), 91–120 (SGNTLLLYACQSSLVEVVQFLLKKGANPNI), 124–161 (SDNTPLSKIISNRFIDKTEIYIAKLLLQNGALTELKDF), and 162–191 (VGFTPIQSATQYGHTEIVKSLIQNGADINV).

The polypeptide is Putative ankyrin repeat protein RBE_0347 (Rickettsia bellii (strain RML369-C)).